The following is a 367-amino-acid chain: tRNA/tmRNA (uracil-C(5))-methyltransferase (367 aa).

S-adenosyl-L-methionine is bound by residues Gln191, Tyr218, Asn223, Glu239, and Asp299. Cys324 functions as the Nucleophile in the catalytic mechanism. Glu358 functions as the Proton acceptor in the catalytic mechanism.

It belongs to the class I-like SAM-binding methyltransferase superfamily. RNA M5U methyltransferase family. TrmA subfamily.

The enzyme catalyses uridine(54) in tRNA + S-adenosyl-L-methionine = 5-methyluridine(54) in tRNA + S-adenosyl-L-homocysteine + H(+). It catalyses the reaction uridine(341) in tmRNA + S-adenosyl-L-methionine = 5-methyluridine(341) in tmRNA + S-adenosyl-L-homocysteine + H(+). Functionally, dual-specificity methyltransferase that catalyzes the formation of 5-methyluridine at position 54 (m5U54) in all tRNAs, and that of position 341 (m5U341) in tmRNA (transfer-mRNA). This is tRNA/tmRNA (uracil-C(5))-methyltransferase from Campylobacter concisus (strain 13826).